The primary structure comprises 419 residues: Putative zinc metalloprotease spyM18_2031 (419 aa).

Residue His18 participates in Zn(2+) binding. Glu19 is a catalytic residue. A Zn(2+)-binding site is contributed by His22. 4 consecutive transmembrane segments (helical) span residues 169 to 191, 301 to 323, 343 to 365, and 392 to 411; these read LITNFAGPMNNFILGIVVFILLV, LAWSGAFTILNALKGLITGFSLN, LESVLSLMAMLSINLGIFNLIPI, and AYITLAGVAIMVVLMIAVTW. In terms of domain architecture, PDZ spans 175–274; that stretch reads GPMNNFILGI…LKTVAVKPQK (100 aa).

Belongs to the peptidase M50B family. Zn(2+) serves as cofactor.

The protein localises to the cell membrane. The polypeptide is Putative zinc metalloprotease spyM18_2031 (Streptococcus pyogenes serotype M18 (strain MGAS8232)).